A 231-amino-acid polypeptide reads, in one-letter code: Protein OPG061 (231 aa).

It belongs to the orthopoxvirus OPG058 family.

The protein resides in the host nucleus. The protein localises to the host nucleolus. The polypeptide is Protein OPG061 (OPG061) (Variola virus).